A 512-amino-acid chain; its full sequence is Cytochrome P450 4d1 (512 aa).

Residues Glu-316 and Cys-456 each coordinate heme.

It belongs to the cytochrome P450 family. Heme serves as cofactor.

Its subcellular location is the endoplasmic reticulum membrane. It is found in the microsome membrane. Its function is as follows. Involved in the metabolism of insect hormones and in the breakdown of synthetic insecticides. The sequence is that of Cytochrome P450 4d1 (Cyp4d1) from Drosophila simulans (Fruit fly).